We begin with the raw amino-acid sequence, 578 residues long: Avenacosidase 2 (578 aa).

A chloroplast-targeting transit peptide spans 1-57 (MALLCSALSNSTHPSFRSHIAGANSENLWHLSAHPAQKSKRRCNLTLSSRAAARISS). Residues Q89, H193, and 238–239 (NE) each bind a beta-D-glucoside. E239 acts as the Proton donor in catalysis. A disulfide bridge connects residues C258 and C264. Residues Y381, E454, W504, 511–512 (EW), and F520 each bind a beta-D-glucoside. E454 acts as the Nucleophile in catalysis.

The protein belongs to the glycosyl hydrolase 1 family. As to quaternary structure, heteromultimer with P60A in a 1:1 stoichiometry. Aggregates to form the fibrillar stromacentre.

The protein resides in the plastid. It localises to the chloroplast stroma. It catalyses the reaction avenacoside B + H2O = 26-desgluco-avenacoside B + D-glucose. Its function is as follows. Beta-glucosidase acting as a preformed defense system. Hydrolyzes the bisdesmosides avenacosides A and B to 26-desgluco-avenacosides exhibiting fungicidal activity. Can use beta-fucoside &gt; beta-glucoside &gt; beta-galactoside &gt; beta-xyloside as substrates, but not alpha-glycosides, beta-thioglucosides and disaccharides. This chain is Avenacosidase 2 (P60B), found in Avena sativa (Oat).